We begin with the raw amino-acid sequence, 356 residues long: tRNA pseudouridine synthase D (356 aa).

The active-site Nucleophile is aspartate 84. The TRUD domain maps to 159 to 302 (GVPNYYGPQR…RRGARRPIRV (144 aa)).

Belongs to the pseudouridine synthase TruD family.

The enzyme catalyses uridine(13) in tRNA = pseudouridine(13) in tRNA. Functionally, responsible for synthesis of pseudouridine from uracil-13 in transfer RNAs. The polypeptide is tRNA pseudouridine synthase D (Thermus thermophilus (strain ATCC 27634 / DSM 579 / HB8)).